Reading from the N-terminus, the 239-residue chain is 7-cyano-7-deazaguanine synthase (239 aa).

8–18 (FSGGLDSTASL) lines the ATP pocket. Zn(2+)-binding residues include Cys-194, Cys-209, Cys-212, and Cys-215.

This sequence belongs to the QueC family.

It carries out the reaction 7-carboxy-7-deazaguanine + NH4(+) + ATP = 7-cyano-7-deazaguanine + ADP + phosphate + H2O + H(+). It functions in the pathway purine metabolism; 7-cyano-7-deazaguanine biosynthesis. Functionally, catalyzes the ATP-dependent conversion of 7-carboxy-7-deazaguanine (CDG) to 7-cyano-7-deazaguanine (preQ(0)). This chain is 7-cyano-7-deazaguanine synthase, found in Pyrococcus abyssi (strain GE5 / Orsay).